We begin with the raw amino-acid sequence, 202 residues long: Na(+)-translocating NADH-quinone reductase subunit E (202 aa).

The next 6 helical transmembrane spans lie at 11 to 31 (SVFIENMALSFFLGMCTFIAV), 35 to 55 (IETAVGLGIAVVIVQTLTVPA), 81 to 101 (FIALMACIGVIAAMVQILEMV), 114 to 134 (GIFLPLITVNCAILAGSLFMI), 144 to 164 (VVYGVGSGFGWALAITAMAGV), and 180 to 200 (LGITFISAGLMALGFMAFSGI).

The protein belongs to the NqrDE/RnfAE family. Composed of six subunits; NqrA, NqrB, NqrC, NqrD, NqrE and NqrF.

It localises to the cell inner membrane. It carries out the reaction a ubiquinone + n Na(+)(in) + NADH + H(+) = a ubiquinol + n Na(+)(out) + NAD(+). In terms of biological role, NQR complex catalyzes the reduction of ubiquinone-1 to ubiquinol by two successive reactions, coupled with the transport of Na(+) ions from the cytoplasm to the periplasm. NqrA to NqrE are probably involved in the second step, the conversion of ubisemiquinone to ubiquinol. The chain is Na(+)-translocating NADH-quinone reductase subunit E from Methylococcus capsulatus (strain ATCC 33009 / NCIMB 11132 / Bath).